The chain runs to 128 residues: Aspartate 1-decarboxylase (128 aa).

Ser25 functions as the Schiff-base intermediate with substrate; via pyruvic acid in the catalytic mechanism. A Pyruvic acid (Ser) modification is found at Ser25. A substrate-binding site is contributed by Thr57. Tyr58 serves as the catalytic Proton donor. 73-75 (GSA) lines the substrate pocket.

Belongs to the PanD family. In terms of assembly, heterooctamer of four alpha and four beta subunits. Pyruvate is required as a cofactor. Post-translationally, is synthesized initially as an inactive proenzyme, which is activated by self-cleavage at a specific serine bond to produce a beta-subunit with a hydroxyl group at its C-terminus and an alpha-subunit with a pyruvoyl group at its N-terminus.

Its subcellular location is the cytoplasm. It carries out the reaction L-aspartate + H(+) = beta-alanine + CO2. The protein operates within cofactor biosynthesis; (R)-pantothenate biosynthesis; beta-alanine from L-aspartate: step 1/1. In terms of biological role, catalyzes the pyruvoyl-dependent decarboxylation of aspartate to produce beta-alanine. In Paraburkholderia phymatum (strain DSM 17167 / CIP 108236 / LMG 21445 / STM815) (Burkholderia phymatum), this protein is Aspartate 1-decarboxylase.